Reading from the N-terminus, the 240-residue chain is MVSPVTVVKSEGPKLVPFFKATCVYFVLWLPSSSPSWVSALIKCLPIFCLWLFLLAHGLGFLLTHPSATRIFVGLVFSAIGDAFLIWQDQGYFVHGMLMFAVTHMLYASAFGMRPLGLRTGLLMVILSGLCYAFLYPNLTGAFTYVVGVYVAIIGFMGWRAMAGLQLVGAAWRWTELAAGTGALLFIVSDLTIALDKFCFPVPYSRALIMSTYYAAQMLIALSAVESREPVEDYRLSKAK.

The Cytoplasmic segment spans residues 1–21 (MVSPVTVVKSEGPKLVPFFKA). A helical membrane pass occupies residues 22–42 (TCVYFVLWLPSSSPSWVSALI). Position 43 (lysine 43) is a topological domain, extracellular. Residues 44 to 64 (CLPIFCLWLFLLAHGLGFLLT) traverse the membrane as a helical segment. Over 65–70 (HPSATR) the chain is Cytoplasmic. Residues 71–91 (IFVGLVFSAIGDAFLIWQDQG) traverse the membrane as a helical segment. Residue tyrosine 92 is a topological domain, extracellular. The chain crosses the membrane as a helical span at residues 93 to 113 (FVHGMLMFAVTHMLYASAFGM). Residues 114 to 115 (RP) lie on the Cytoplasmic side of the membrane. A helical transmembrane segment spans residues 116–136 (LGLRTGLLMVILSGLCYAFLY). The Extracellular portion of the chain corresponds to 137 to 138 (PN). The helical transmembrane segment at 139–159 (LTGAFTYVVGVYVAIIGFMGW) threads the bilayer. Over 160–174 (RAMAGLQLVGAAWRW) the chain is Cytoplasmic. Residues 175–195 (TELAAGTGALLFIVSDLTIAL) traverse the membrane as a helical segment. Residues 196-206 (DKFCFPVPYSR) are Extracellular-facing. A helical membrane pass occupies residues 207–227 (ALIMSTYYAAQMLIALSAVES). The Cytoplasmic portion of the chain corresponds to 228 to 240 (REPVEDYRLSKAK).

Belongs to the TMEM86 family.

The protein resides in the endoplasmic reticulum membrane. The catalysed reaction is a 1-O-(1Z-alkenyl)-sn-glycero-3-phosphocholine + H2O = a 2,3-saturated aldehyde + sn-glycerol 3-phosphocholine. It carries out the reaction a 1-O-(1Z-alkenyl)-sn-glycero-3-phosphoethanolamine + H2O = a 2,3-saturated aldehyde + sn-glycero-3-phosphoethanolamine. Catalyzes the hydrolysis of the vinyl ether bond of choline or ethanolamine lysoplasmalogens, forming fatty aldehyde and glycerophosphocholine or glycerophosphoethanolamine, respectively and is specific for the sn-2-deacylated (lyso) form of plasmalogen. Plays an important role in lysoplasmalogen metabolism in the adipocyte tissue and macrophages. This chain is Lysoplasmalogenase TMEM86A (TMEM86A), found in Bos taurus (Bovine).